Here is a 733-residue protein sequence, read N- to C-terminus: Protein psiM (733 aa).

Positions 1–26 (MKKINNNKIFVLFLTILLYLLNITTA) are cleaved as a signal peptide. Asparagine 22, asparagine 65, and asparagine 96 each carry an N-linked (GlcNAc...) asparagine glycan. Topologically, residues 27–672 (QKPVSINIKI…VCQKAALVST (646 aa)) are extracellular. Residues 114-260 (NYDSDSGNYI…YDYCGVCNGD (147 aa)) form the PA14 domain. Residues asparagine 277, asparagine 336, asparagine 379, asparagine 428, asparagine 471, asparagine 537, asparagine 573, and asparagine 641 are each glycosylated (N-linked (GlcNAc...) asparagine). Residues 673 to 693 (AVIASVVVVGAVVLGAAIFAG) traverse the membrane as a helical segment. At 694–733 (KKGYDAWKTSQGNVMAASQANPLYTQSSNGGENPLYNSPT) the chain is on the cytoplasmic side.

It belongs to the prespore-cell-inducing factor family.

It is found in the membrane. The chain is Protein psiM (psiM) from Dictyostelium discoideum (Social amoeba).